The sequence spans 405 residues: Tryptophan synthase beta chain (405 aa).

Position 98 is an N6-(pyridoxal phosphate)lysine (Lys98).

It belongs to the TrpB family. In terms of assembly, tetramer of two alpha and two beta chains. Requires pyridoxal 5'-phosphate as cofactor.

It catalyses the reaction (1S,2R)-1-C-(indol-3-yl)glycerol 3-phosphate + L-serine = D-glyceraldehyde 3-phosphate + L-tryptophan + H2O. Its pathway is amino-acid biosynthesis; L-tryptophan biosynthesis; L-tryptophan from chorismate: step 5/5. Its function is as follows. The beta subunit is responsible for the synthesis of L-tryptophan from indole and L-serine. The polypeptide is Tryptophan synthase beta chain (Xanthomonas axonopodis pv. citri (strain 306)).